Here is a 193-residue protein sequence, read N- to C-terminus: Interferon epsilon (193 aa).

An N-terminal signal peptide occupies residues 1–21 (MINKSFFEIMLVLLASSTGFS). Cysteine 53 and cysteine 163 form a disulfide bridge. A glycan (N-linked (GlcNAc...) asparagine) is linked at asparagine 139.

It belongs to the alpha/beta interferon family.

The protein resides in the secreted. Functionally, type I interferon required for maintaining basal levels of IFN-regulated genes, including 2'-5'-oligoadenylate synthetase, IRF7 and ISG15, in the female reproductive tract. Directly mediates protection against viral and bacterial genital infections. In Sus scrofa (Pig), this protein is Interferon epsilon (IFNE).